Consider the following 473-residue polypeptide: Adenosylhomocysteinase (473 aa).

Thr-60, Asp-135, and Glu-197 together coordinate substrate. Position 198–200 (198–200 (TTT)) interacts with NAD(+). Residues Lys-227 and Asp-231 each contribute to the substrate site. NAD(+)-binding positions include Asn-232, 261 to 266 (GFGDVG), Glu-284, Asn-319, 340 to 342 (IGH), and Asn-385.

The protein belongs to the adenosylhomocysteinase family. The cofactor is NAD(+).

Its subcellular location is the cytoplasm. It catalyses the reaction S-adenosyl-L-homocysteine + H2O = L-homocysteine + adenosine. It functions in the pathway amino-acid biosynthesis; L-homocysteine biosynthesis; L-homocysteine from S-adenosyl-L-homocysteine: step 1/1. Functionally, may play a key role in the regulation of the intracellular concentration of adenosylhomocysteine. This is Adenosylhomocysteinase from Bradyrhizobium sp. (strain BTAi1 / ATCC BAA-1182).